The primary structure comprises 122 residues: S-adenosylmethionine decarboxylase proenzyme (122 aa).

The Schiff-base intermediate with substrate; via pyruvic acid role is filled by serine 63. Serine 63 is subject to Pyruvic acid (Ser); by autocatalysis. Histidine 68 (proton acceptor; for processing activity) is an active-site residue. Cysteine 83 acts as the Proton donor; for catalytic activity in catalysis.

This sequence belongs to the prokaryotic AdoMetDC family. Type 1 subfamily. In terms of assembly, heterotetramer of two alpha and two beta chains arranged as a dimer of alpha/beta heterodimers. Pyruvate serves as cofactor. Post-translationally, is synthesized initially as an inactive proenzyme. Formation of the active enzyme involves a self-maturation process in which the active site pyruvoyl group is generated from an internal serine residue via an autocatalytic post-translational modification. Two non-identical subunits are generated from the proenzyme in this reaction, and the pyruvate is formed at the N-terminus of the alpha chain, which is derived from the carboxyl end of the proenzyme. The post-translation cleavage follows an unusual pathway, termed non-hydrolytic serinolysis, in which the side chain hydroxyl group of the serine supplies its oxygen atom to form the C-terminus of the beta chain, while the remainder of the serine residue undergoes an oxidative deamination to produce ammonia and the pyruvoyl group blocking the N-terminus of the alpha chain.

The catalysed reaction is S-adenosyl-L-methionine + H(+) = S-adenosyl 3-(methylsulfanyl)propylamine + CO2. Its pathway is amine and polyamine biosynthesis; S-adenosylmethioninamine biosynthesis; S-adenosylmethioninamine from S-adenosyl-L-methionine: step 1/1. Catalyzes the decarboxylation of S-adenosylmethionine to S-adenosylmethioninamine (dcAdoMet), the propylamine donor required for the synthesis of the polyamines spermine and spermidine from the diamine putrescine. This chain is S-adenosylmethionine decarboxylase proenzyme, found in Methanococcus vannielii (strain ATCC 35089 / DSM 1224 / JCM 13029 / OCM 148 / SB).